Here is a 620-residue protein sequence, read N- to C-terminus: Somatic embryogenesis receptor kinase 4 (620 aa).

The first 33 residues, 1 to 33 (MTSSKMEQRSLLCFLYLLLLFNFTLRVAGNAEG), serve as a signal peptide directing secretion. Topologically, residues 34-234 (DALTQLKNSL…GGQMTAAIAG (201 aa)) are extracellular. LRR repeat units lie at residues 100 to 122 (NLQY…LGDL), 124 to 146 (ELVS…LGKL), 148 to 170 (KLRF…LTSV), 171 to 193 (QLQV…GSFS), and 194 to 215 (LFTP…PPTS). N-linked (GlcNAc...) asparagine glycosylation occurs at asparagine 110. 3 N-linked (GlcNAc...) asparagine glycosylation sites follow: asparagine 156, asparagine 189, and asparagine 202. The segment at 205–227 (LTDLPEPPPTSTSPTPPPPSGGQ) is disordered. Pro residues predominate over residues 209-224 (PEPPPTSTSPTPPPPS). A helical transmembrane segment spans residues 235–255 (GVAAGAALLFAVPAIAFAWWL). Topologically, residues 256-620 (RRKPQDHFFD…IENDYPSGPR (365 aa)) are cytoplasmic. A Phosphothreonine modification is found at threonine 291. The 298-residue stretch at 294–591 (FSNKNVLGRG…KEEMPIHDFN (298 aa)) folds into the Protein kinase domain. Serine 295 is subject to Phosphoserine. Residues 300-308 (LGRGGFGKV) and lysine 322 contribute to the ATP site. Phosphoserine occurs at positions 375 and 378. Residue aspartate 421 is the Proton acceptor of the active site. Residues threonine 454, threonine 455, and threonine 460 each carry the phosphothreonine modification. Tyrosine 468 is modified (phosphotyrosine). Position 470 is a phosphoserine (serine 470). The residue at position 471 (threonine 471) is a Phosphothreonine. The residue at position 475 (serine 475) is a Phosphoserine. Threonine 551 is subject to Phosphothreonine.

It belongs to the protein kinase superfamily. Ser/Thr protein kinase family. As to quaternary structure, interacts with the EF-Tu receptor EFR and FLS2 in a specific ligand-induced manner. Interacts with TMK4/BARK1. Interacts with ERECTA in a EPF2-induced manner. Interacts with ERL1 in a EPF1-induced manner. Interacts with TMM. Forms a complex with MIK2 in response to SCOOP12 perception. In terms of processing, autophosphorylated on Thr and Tyr residues.

It is found in the cell membrane. It catalyses the reaction L-seryl-[protein] + ATP = O-phospho-L-seryl-[protein] + ADP + H(+). The catalysed reaction is L-threonyl-[protein] + ATP = O-phospho-L-threonyl-[protein] + ADP + H(+). The enzyme catalyses L-tyrosyl-[protein] + ATP = O-phospho-L-tyrosyl-[protein] + ADP + H(+). In terms of biological role, dual specificity kinase acting on both serine/threonine- and tyrosine-containing substrates. Positively regulates the BR-dependent plant growth pathway and negatively regulates the BR-independent cell-death pathway. Required during SCOOP small peptides (e.g. SCOOP10 and SCOOP12) perception and signaling; associates with MIK2 as a coreceptor upon MIK2 perception of SCOOP peptides, and relays the signaling through the activation of receptor-like cytosolic kinases (RLCKs) BIK1 and PBL1. This chain is Somatic embryogenesis receptor kinase 4, found in Arabidopsis thaliana (Mouse-ear cress).